We begin with the raw amino-acid sequence, 232 residues long: Large ribosomal subunit protein uL1 (232 aa).

It belongs to the universal ribosomal protein uL1 family. As to quaternary structure, part of the 50S ribosomal subunit.

Binds directly to 23S rRNA. The L1 stalk is quite mobile in the ribosome, and is involved in E site tRNA release. Functionally, protein L1 is also a translational repressor protein, it controls the translation of the L11 operon by binding to its mRNA. The protein is Large ribosomal subunit protein uL1 of Bacteroides thetaiotaomicron (strain ATCC 29148 / DSM 2079 / JCM 5827 / CCUG 10774 / NCTC 10582 / VPI-5482 / E50).